A 365-amino-acid chain; its full sequence is Uroporphyrinogen decarboxylase (365 aa).

Over residues methionine 1–serine 17 the composition is skewed to polar residues. A disordered region spans residues methionine 1 to alanine 20. Substrate is bound by residues arginine 48–arginine 52, aspartate 97, tyrosine 172, serine 227, and histidine 341.

Belongs to the uroporphyrinogen decarboxylase family. In terms of assembly, homodimer.

It is found in the cytoplasm. It carries out the reaction uroporphyrinogen III + 4 H(+) = coproporphyrinogen III + 4 CO2. Its pathway is porphyrin-containing compound metabolism; protoporphyrin-IX biosynthesis; coproporphyrinogen-III from 5-aminolevulinate: step 4/4. In terms of biological role, catalyzes the decarboxylation of four acetate groups of uroporphyrinogen-III to yield coproporphyrinogen-III. The chain is Uroporphyrinogen decarboxylase from Streptomyces griseus subsp. griseus (strain JCM 4626 / CBS 651.72 / NBRC 13350 / KCC S-0626 / ISP 5235).